The primary structure comprises 205 residues: Large ribosomal subunit protein uL4 (205 aa).

This sequence belongs to the universal ribosomal protein uL4 family. Part of the 50S ribosomal subunit.

In terms of biological role, one of the primary rRNA binding proteins, this protein initially binds near the 5'-end of the 23S rRNA. It is important during the early stages of 50S assembly. It makes multiple contacts with different domains of the 23S rRNA in the assembled 50S subunit and ribosome. Functionally, forms part of the polypeptide exit tunnel. The chain is Large ribosomal subunit protein uL4 from Dinoroseobacter shibae (strain DSM 16493 / NCIMB 14021 / DFL 12).